Consider the following 255-residue polypeptide: Thiazole synthase (255 aa).

The Schiff-base intermediate with DXP role is filled by Lys-96. 1-deoxy-D-xylulose 5-phosphate contacts are provided by residues Gly-157, 183-184 (AG), and 205-206 (NT).

Belongs to the ThiG family. As to quaternary structure, homotetramer. Forms heterodimers with either ThiH or ThiS.

The protein localises to the cytoplasm. The enzyme catalyses [ThiS sulfur-carrier protein]-C-terminal-Gly-aminoethanethioate + 2-iminoacetate + 1-deoxy-D-xylulose 5-phosphate = [ThiS sulfur-carrier protein]-C-terminal Gly-Gly + 2-[(2R,5Z)-2-carboxy-4-methylthiazol-5(2H)-ylidene]ethyl phosphate + 2 H2O + H(+). It participates in cofactor biosynthesis; thiamine diphosphate biosynthesis. Catalyzes the rearrangement of 1-deoxy-D-xylulose 5-phosphate (DXP) to produce the thiazole phosphate moiety of thiamine. Sulfur is provided by the thiocarboxylate moiety of the carrier protein ThiS. In vitro, sulfur can be provided by H(2)S. The chain is Thiazole synthase from Staphylococcus epidermidis (strain ATCC 12228 / FDA PCI 1200).